A 404-amino-acid polypeptide reads, in one-letter code: Propionate kinase (404 aa).

This sequence belongs to the acetokinase family. PduW subfamily.

Its subcellular location is the cytoplasm. It carries out the reaction propanoate + ATP = propanoyl phosphate + ADP. Its pathway is polyol metabolism; 1,2-propanediol degradation. In terms of biological role, works with phosphate acetyltransferase (pta) to capture exogenous propionate and regenerate propionyl-CoA during degradation of 1,2-propanediol (1,2-PD). Its function is as follows. Expression of a cosmid containing the full 21-gene pdu operon in E.coli allows E.coli to grow on 1,2-propanediol (1,2-PD) with the appearance of bacterial microcompartments (BMC) in its cytoplasm. The sequence is that of Propionate kinase from Citrobacter freundii.